We begin with the raw amino-acid sequence, 553 residues long: Methionine--tRNA ligase (553 aa).

The 'HIGH' region motif lies at 12 to 22 (PYANSQLHLGH). Residues Cys144, Cys147, Cys157, and Cys160 each coordinate Zn(2+). A 'KMSKS' region motif is present at residues 332-336 (KFSKS). Lys335 contributes to the ATP binding site.

The protein belongs to the class-I aminoacyl-tRNA synthetase family. MetG type 1 subfamily. Monomer. Requires Zn(2+) as cofactor.

Its subcellular location is the cytoplasm. It catalyses the reaction tRNA(Met) + L-methionine + ATP = L-methionyl-tRNA(Met) + AMP + diphosphate. In terms of biological role, is required not only for elongation of protein synthesis but also for the initiation of all mRNA translation through initiator tRNA(fMet) aminoacylation. The chain is Methionine--tRNA ligase from Dehalococcoides mccartyi (strain CBDB1).